The chain runs to 732 residues: Catalase-peroxidase (732 aa).

The N-terminal stretch at M1–A15 is a signal peptide. The tryptophyl-tyrosyl-methioninium (Trp-Tyr) (with M-245) cross-link spans W96–Y219. Catalysis depends on H97, which acts as the Proton acceptor. The tryptophyl-tyrosyl-methioninium (Tyr-Met) (with W-96) cross-link spans Y219–M245. Heme b is bound at residue H260.

The protein belongs to the peroxidase family. Peroxidase/catalase subfamily. In terms of assembly, homodimer or homotetramer. It depends on heme b as a cofactor. Post-translationally, formation of the three residue Trp-Tyr-Met cross-link is important for the catalase, but not the peroxidase activity of the enzyme.

The enzyme catalyses H2O2 + AH2 = A + 2 H2O. It carries out the reaction 2 H2O2 = O2 + 2 H2O. Its function is as follows. Bifunctional enzyme with both catalase and broad-spectrum peroxidase activity. The sequence is that of Catalase-peroxidase from Acidobacterium capsulatum (strain ATCC 51196 / DSM 11244 / BCRC 80197 / JCM 7670 / NBRC 15755 / NCIMB 13165 / 161).